A 203-amino-acid polypeptide reads, in one-letter code: Glycerol-3-phosphate acyltransferase (203 aa).

6 helical membrane passes run 3–23 (ILLA…VVVS), 51–71 (KAAI…VWLV), 74–94 (FGIG…LGHL), 116–136 (AVHP…AFFF), 140–160 (SLAA…LFGT), and 164–178 (PVAW…LLIW).

The protein belongs to the PlsY family. As to quaternary structure, probably interacts with PlsX.

The protein localises to the cell inner membrane. It carries out the reaction an acyl phosphate + sn-glycerol 3-phosphate = a 1-acyl-sn-glycero-3-phosphate + phosphate. It participates in lipid metabolism; phospholipid metabolism. Catalyzes the transfer of an acyl group from acyl-phosphate (acyl-PO(4)) to glycerol-3-phosphate (G3P) to form lysophosphatidic acid (LPA). This enzyme utilizes acyl-phosphate as fatty acyl donor, but not acyl-CoA or acyl-ACP. The chain is Glycerol-3-phosphate acyltransferase from Burkholderia pseudomallei (strain K96243).